The primary structure comprises 171 residues: Urease accessory protein UreE (171 aa).

The interval 143–171 is disordered; it reads SGGHQHHHGHDHDHGHHGHDHDHHHPDHE. Basic and acidic residues predominate over residues 152 to 171; the sequence is HDHDHGHHGHDHDHHHPDHE.

This sequence belongs to the UreE family.

It is found in the cytoplasm. Its function is as follows. Involved in urease metallocenter assembly. Binds nickel. Probably functions as a nickel donor during metallocenter assembly. In Brucella abortus biovar 1 (strain 9-941), this protein is Urease accessory protein UreE.